Here is a 194-residue protein sequence, read N- to C-terminus: Thymidylate kinase (194 aa).

ATP is bound at residue 7 to 14 (GIDTAGKS).

It belongs to the thymidylate kinase family.

The catalysed reaction is dTMP + ATP = dTDP + ADP. Phosphorylation of dTMP to form dTDP in both de novo and salvage pathways of dTTP synthesis. This chain is Thymidylate kinase, found in Nautilia profundicola (strain ATCC BAA-1463 / DSM 18972 / AmH).